The primary structure comprises 103 residues: c-Myc-binding protein (103 aa).

It belongs to the AMY1 family. As to quaternary structure, binds via its C-terminal region to the N-terminal region of MYC. Associates with AKAP1/S-AKAP84. Interacts with MYCBPAP. Interacts with CFAP91.

Its subcellular location is the cytoplasm. It localises to the nucleus. Functionally, may control the transcriptional activity of MYC. Stimulates the activation of E box-dependent transcription by MYC. The protein is c-Myc-binding protein (MYCBP) of Pongo abelii (Sumatran orangutan).